The chain runs to 358 residues: Methylthioribose-1-phosphate isomerase (358 aa).

Residues 54-56, arginine 96, and glutamine 205 each bind substrate; that span reads RGA. Aspartate 246 functions as the Proton donor in the catalytic mechanism. 256 to 257 is a binding site for substrate; that stretch reads NK.

Belongs to the eIF-2B alpha/beta/delta subunits family. MtnA subfamily.

The enzyme catalyses 5-(methylsulfanyl)-alpha-D-ribose 1-phosphate = 5-(methylsulfanyl)-D-ribulose 1-phosphate. It participates in amino-acid biosynthesis; L-methionine biosynthesis via salvage pathway; L-methionine from S-methyl-5-thio-alpha-D-ribose 1-phosphate: step 1/6. In terms of biological role, catalyzes the interconversion of methylthioribose-1-phosphate (MTR-1-P) into methylthioribulose-1-phosphate (MTRu-1-P). This chain is Methylthioribose-1-phosphate isomerase, found in Azotobacter vinelandii (strain DJ / ATCC BAA-1303).